A 468-amino-acid polypeptide reads, in one-letter code: UDP-N-acetylmuramate--L-alanine ligase (468 aa).

112 to 118 (GTHGKTT) contributes to the ATP binding site.

This sequence belongs to the MurCDEF family.

It is found in the cytoplasm. The enzyme catalyses UDP-N-acetyl-alpha-D-muramate + L-alanine + ATP = UDP-N-acetyl-alpha-D-muramoyl-L-alanine + ADP + phosphate + H(+). It functions in the pathway cell wall biogenesis; peptidoglycan biosynthesis. Its function is as follows. Cell wall formation. The polypeptide is UDP-N-acetylmuramate--L-alanine ligase (Bordetella avium (strain 197N)).